We begin with the raw amino-acid sequence, 88 residues long: Small ribosomal subunit protein bS20 (88 aa).

A disordered region spans residues 1–20; the sequence is MANTKSARKSLIKSKQQRKC.

This sequence belongs to the bacterial ribosomal protein bS20 family.

Functionally, binds directly to 16S ribosomal RNA. In Blochmanniella pennsylvanica (strain BPEN), this protein is Small ribosomal subunit protein bS20.